Consider the following 364-residue polypeptide: Probable tartrate dehydrogenase/decarboxylase TtuC (364 aa).

The Mn(2+) site is built by D222, D246, and D250.

The protein belongs to the isocitrate and isopropylmalate dehydrogenases family. Requires Mg(2+) as cofactor. Mn(2+) is required as a cofactor. K(+) serves as cofactor.

It localises to the cytoplasm. It carries out the reaction tartrate + NAD(+) = 2-hydroxy-3-oxosuccinate + NADH + H(+). It catalyses the reaction (2R,3S)-tartrate + NAD(+) = 2-hydroxy-3-oxosuccinate + NADH + H(+). The enzyme catalyses (2R,3R)-tartrate + NAD(+) = 2-hydroxy-3-oxosuccinate + NADH + H(+). The catalysed reaction is (2R,3R)-tartrate + H(+) = (R)-glycerate + CO2. It carries out the reaction (R)-malate + NAD(+) = pyruvate + CO2 + NADH. It functions in the pathway carbohydrate acid metabolism; tartrate degradation; 2-hydroxy-3-oxosuccinate from L-tartrate: step 1/1. The protein operates within carbohydrate acid metabolism; tartrate degradation; 2-hydroxy-3-oxosuccinate from meso-tartrate: step 1/1. Its pathway is carbohydrate acid metabolism; tartrate degradation; D-glycerate from L-tartrate: step 1/1. Its function is as follows. Has multiple catalytic activities. Apart from catalyzing the oxidation of (+)-tartrate to oxaloglycolate, also converts meso-tartrate to D-glycerate and catalyzes the oxidative decarboxylation of D-malate to pyruvate. In Agrobacterium vitis (Rhizobium vitis), this protein is Probable tartrate dehydrogenase/decarboxylase TtuC (ttuC).